Reading from the N-terminus, the 242-residue chain is Probable 2-phosphosulfolactate phosphatase (242 aa).

This sequence belongs to the ComB family. Mg(2+) is required as a cofactor.

It carries out the reaction (2R)-O-phospho-3-sulfolactate + H2O = (2R)-3-sulfolactate + phosphate. The polypeptide is Probable 2-phosphosulfolactate phosphatase (Picosynechococcus sp. (strain ATCC 27264 / PCC 7002 / PR-6) (Agmenellum quadruplicatum)).